Consider the following 35-residue polypeptide: Phosphoribulokinase (35 aa).

It belongs to the phosphoribulokinase family.

The protein resides in the plastid. It localises to the chloroplast. The catalysed reaction is D-ribulose 5-phosphate + ATP = D-ribulose 1,5-bisphosphate + ADP + H(+). The protein operates within carbohydrate biosynthesis; Calvin cycle. Light regulated via thioredoxin by reversible oxidation/reduction of sulfhydryl/disulfide groups. In Pinus pinaster (Maritime pine), this protein is Phosphoribulokinase.